The following is a 368-amino-acid chain: Zinc finger protein 24 (368 aa).

A Glycyl lysine isopeptide (Lys-Gly) (interchain with G-Cter in SUMO2) cross-link involves residue Lys-22. Residue Lys-27 forms a Glycyl lysine isopeptide (Lys-Gly) (interchain with G-Cter in SUMO1); alternate linkage. Lys-27 is covalently cross-linked (Glycyl lysine isopeptide (Lys-Gly) (interchain with G-Cter in SUMO2); alternate). The region spanning 52-134 (RQRFRQFGYQ…AVLEDLESEL (83 aa)) is the SCAN box domain. Phosphoserine occurs at positions 132 and 142. Residues Lys-147, Lys-177, and Lys-236 each participate in a glycyl lysine isopeptide (Lys-Gly) (interchain with G-Cter in SUMO2) cross-link. The C2H2-type 1 zinc-finger motif lies at 251-273 (HICDECGKHFSQGSALILHQRIH). Residues 251 to 301 (HICDECGKHFSQGSALILHQRIHSGEKPYGCVECGKAFSRSSILVQHQRVH) are necessary and sufficient for nuclear localization. Ser-274 is subject to Phosphoserine. Residues Lys-277 and Lys-286 each participate in a glycyl lysine isopeptide (Lys-Gly) (interchain with G-Cter in SUMO2) cross-link. 3 C2H2-type zinc fingers span residues 279-301 (YGCVECGKAFSRSSILVQHQRVH), 307-329 (YKCLECGKAFSQNSGLINHQRIH), and 335-357 (YECVQCGKSYSQSSNLFRHQRRH). Ser-292 is modified (phosphoserine). Tyr-335 carries the post-translational modification Phosphotyrosine. Glycyl lysine isopeptide (Lys-Gly) (interchain with G-Cter in SUMO2) cross-links involve residues Lys-361 and Lys-367.

It belongs to the krueppel C2H2-type zinc-finger protein family. In terms of processing, sumoylated. In terms of tissue distribution, widely expressed with highest levels in heart, brain, liver, skeletal muscle, kidney and testis and very low levels in spleen and lung.

It is found in the nucleus. Its function is as follows. Transcription factor required for myelination of differentiated oligodendrocytes. Required for the conversion of oligodendrocytes from the premyelinating to the myelinating state. In the developing central nervous system (CNS), involved in the maintenance in the progenitor stage by promoting the cell cycle. Specifically binds to the 5'-TCAT-3' DNA sequence. Has transcription repressor activity in vitro. The polypeptide is Zinc finger protein 24 (Mus musculus (Mouse)).